Here is a 68-residue protein sequence, read N- to C-terminus: Large ribosomal subunit protein bL32 (68 aa).

It belongs to the bacterial ribosomal protein bL32 family.

The sequence is that of Large ribosomal subunit protein bL32 from Orientia tsutsugamushi (strain Ikeda) (Rickettsia tsutsugamushi).